Consider the following 264-residue polypeptide: Hydroxyethylthiazole kinase (264 aa).

M40 serves as a coordination point for substrate. ATP contacts are provided by K116 and T161. Residue G188 coordinates substrate.

Belongs to the Thz kinase family. Mg(2+) serves as cofactor.

The catalysed reaction is 5-(2-hydroxyethyl)-4-methylthiazole + ATP = 4-methyl-5-(2-phosphooxyethyl)-thiazole + ADP + H(+). It functions in the pathway cofactor biosynthesis; thiamine diphosphate biosynthesis; 4-methyl-5-(2-phosphoethyl)-thiazole from 5-(2-hydroxyethyl)-4-methylthiazole: step 1/1. Its function is as follows. Catalyzes the phosphorylation of the hydroxyl group of 4-methyl-5-beta-hydroxyethylthiazole (THZ). This is Hydroxyethylthiazole kinase from Staphylococcus carnosus (strain TM300).